The following is a 1570-amino-acid chain: Mediator of RNA polymerase II transcription subunit 1 (1570 aa).

2 short sequence motifs (LXXLL motif) span residues 585-589 (LTSLL) and 626-630 (LMNLL). 3 disordered regions span residues 592–687 (TNNT…TEDD), 771–880 (SKLS…FKDF), and 922–1561 (SKTL…MDDD). A compositionally biased stretch (basic and acidic residues) spans 675–687 (TGAEKMKNQTEDD). Composition is skewed to polar residues over residues 788 to 801 (RDSS…STLF), 832 to 861 (GSPN…QSGF), and 931 to 942 (QETQSRSQSPLL). The span at 946–958 (LGKDRPQKQKVKE) shows a compositional bias: basic and acidic residues. Over residues 961–970 (NGGGAGGGLS) the composition is skewed to gly residues. Composition is skewed to low complexity over residues 1022 to 1035 (PTST…GTSG), 1066 to 1082 (SSHG…SSSS), 1089 to 1113 (SSLS…MKIG), 1121 to 1140 (SGQS…SMGK), and 1152 to 1161 (SSNVSNSSGS). The segment covering 1173–1190 (MNPSLSKPNISPSHSRPS) has biased composition (polar residues). Positions 1217-1228 (GSGGQHLSGGGS) are enriched in gly residues. Over residues 1229 to 1271 (NSTTKSSSGLVSSGSLSQKPNSSSSSSSSSSSSSSSSSSSSSS) the composition is skewed to low complexity. Residues 1276 to 1287 (VSQNLHGNSKGK) show a composition bias toward polar residues. The span at 1308–1328 (VGTGGPGSEDPMDGGGGGGST) shows a compositional bias: gly residues. Residues 1347-1359 (PTKREKSEKDKSK) show a composition bias toward basic and acidic residues. Composition is skewed to polar residues over residues 1418-1433 (SQMQ…SGST) and 1441-1455 (PSHN…QALD). The span at 1459-1469 (ESGSSSIAEKS) shows a compositional bias: low complexity. A compositionally biased stretch (basic residues) spans 1494 to 1503 (KHKKHKKEKK). Residues 1504-1516 (RLKDKDRDREKKK) show a composition bias toward basic and acidic residues. Residues 1536 to 1546 (MAMSGGSMMSS) show a composition bias toward low complexity.

Belongs to the Mediator complex subunit 1 family. In terms of assembly, component of the Mediator complex.

It localises to the nucleus. In terms of biological role, component of the Mediator complex, a coactivator involved in the regulated transcription of nearly all RNA polymerase II-dependent genes. Mediator functions as a bridge to convey information from gene-specific regulatory proteins to the basal RNA polymerase II transcription machinery. Mediator is recruited to promoters by direct interactions with regulatory proteins and serves as a scaffold for the assembly of a functional preinitiation complex with RNA polymerase II and the general transcription factors. The protein is Mediator of RNA polymerase II transcription subunit 1 (med1) of Xenopus laevis (African clawed frog).